The sequence spans 366 residues: ERCC4 domain-containing protein EP364R (366 aa).

The ERCC4 domain occupies 3–101 (FLVADHREHH…QLYFFVEGPA (99 aa)). Polar residues-rich tracts occupy residues 320-331 (RPTMQVATQPAA) and 349-366 (PTGH…TVRC). The segment at 320–366 (RPTMQVATQPAATQPLHKVSDDASSDASSPTGHQTLSKEMSLNTVRC) is disordered.

The protein belongs to the asfivirus EP364R family.

Plays a role in the inhibition of type I interferon signaling pathway. Mechanistically, specifically interacts with 2',3'-cGAMP and cleaves it via its phosphodiesterase activity. In turn, prevents 2',3'-cGAMP interaction with host ER-resident STING1 leading to inhibition of downstream signaling pathway and type I interferon production. The protein is ERCC4 domain-containing protein EP364R of Ornithodoros (relapsing fever ticks).